The sequence spans 622 residues: METAPKPGRGVPPKRDKPQAKRKKPRRYWEEETTPAAVATSPGPPRKKARTGESRPPRSKSAHIAQKSRFSKKPPISKTAPDWKKPQRTLSGAQDPFPGPVPAPLEEARKFCRIDKSKTLPHSKPKTQSKLEKAEAQEEEASVRAARAELLLAEEPGFLVGEDGEDTAKILQTDIVEAVDIASAAKHFDLNLRQFGPYRLNYSRTGRHLALGGRRGHVAALDWVTKKLMCEINVMEAVRDIHFLHSEALLAVAQNRWLYIYDNQGIELHCIRRCDRVTRLEFLPFHFLLATTSETGFLTYLDVSVGKIVTALNVRAGRLSVMAQNPYNAVIHLGHSNGTVSLWSPAVKEPLAKILCHRGGVRAVAVDSTGTYMATSGLDHQLKIFDLRGTFQPLSSRTLPQGAGHLAFSQRGLLVAGMGDVVNIWAGQGKASPPSLEQPYLTHRLSGHVHGLQFCPFEDVLGVGHSGGFTSMLVPGAAEPNFDGLENNPYRSRKQRQEWEVKALLEKVPAELICLNPRALAEVDVVTLEQQKKERIERLGYDPDAKAAFQPKAKQKGRSSTASLVKRKKKVMDQEHRDKVRQSLEQQQQKKKQDMAMPPGARPSALDRFVRRAREGGLQVDP.

A disordered region spans residues 1 to 135 (METAPKPGRG…KTQSKLEKAE (135 aa)). S41 carries the post-translational modification Phosphoserine. Basic and acidic residues predominate over residues 106 to 118 (EEARKFCRIDKSK). WD repeat units follow at residues 192–233 (LRQF…CEIN), 234–271 (VMEA…LHCI), 314–353 (VRAG…PLAK), 356–395 (CHRG…QPLS), and 398–435 (TLPQ…SPPS). The disordered stretch occupies residues 547-622 (AAFQPKAKQK…AREGGLQVDP (76 aa)). The segment covering 571 to 582 (VMDQEHRDKVRQ) has biased composition (basic and acidic residues).

Part of the small subunit (SSU) processome, composed of more than 70 proteins and the RNA chaperone small nucleolar RNA (snoRNA) U3. Interacts with DDX21, NCL, NOP2 and EBNA1BP2.

Its subcellular location is the nucleus. The protein localises to the nucleolus. Functionally, scaffold component of the nucleolar structure. Required for localization of DDX21 and NCL to the granular compartment of the nucleolus. Part of the small subunit (SSU) processome, first precursor of the small eukaryotic ribosomal subunit. During the assembly of the SSU processome in the nucleolus, many ribosome biogenesis factors, an RNA chaperone and ribosomal proteins associate with the nascent pre-rRNA and work in concert to generate RNA folding, modifications, rearrangements and cleavage as well as targeted degradation of pre-ribosomal RNA by the RNA exosome. The sequence is that of WD repeat-containing protein 46 (Wdr46) from Mus musculus (Mouse).